We begin with the raw amino-acid sequence, 507 residues long: Prolyl carboxy peptidase like protein 5 (507 aa).

A signal peptide spans Met-1 to Cys-16. A glycan (N-linked (GlcNAc...) asparagine) is linked at Asn-125. The active-site Charge relay system is Ser-172. Residues Asn-332 and Asn-407 are each glycosylated (N-linked (GlcNAc...) asparagine). Active-site charge relay system residues include Asp-439 and His-466.

It belongs to the peptidase S28 family.

The chain is Prolyl carboxy peptidase like protein 5 from Caenorhabditis elegans.